The following is a 226-amino-acid chain: Cytidylate kinase (226 aa).

10 to 18 (GPASSGKST) contributes to the ATP binding site.

It belongs to the cytidylate kinase family. Type 1 subfamily.

The protein resides in the cytoplasm. The enzyme catalyses CMP + ATP = CDP + ADP. It carries out the reaction dCMP + ATP = dCDP + ADP. This is Cytidylate kinase from Streptococcus pyogenes serotype M18 (strain MGAS8232).